Consider the following 286-residue polypeptide: ATP synthase gamma chain (286 aa).

It belongs to the ATPase gamma chain family. F-type ATPases have 2 components, CF(1) - the catalytic core - and CF(0) - the membrane proton channel. CF(1) has five subunits: alpha(3), beta(3), gamma(1), delta(1), epsilon(1). CF(0) has three main subunits: a, b and c.

The protein resides in the cell inner membrane. Produces ATP from ADP in the presence of a proton gradient across the membrane. The gamma chain is believed to be important in regulating ATPase activity and the flow of protons through the CF(0) complex. This chain is ATP synthase gamma chain, found in Shewanella oneidensis (strain ATCC 700550 / JCM 31522 / CIP 106686 / LMG 19005 / NCIMB 14063 / MR-1).